The primary structure comprises 101 residues: Cell division protein FtsB (101 aa).

Residues 1 to 3 (MRI) are Cytoplasmic-facing. The helical transmembrane segment at 4-21 (VIYSMLVLLIAIQYPLWL) threads the bilayer. At 22 to 101 (GKGGWLKVYE…KSSDTQVTKQ (80 aa)) the chain is on the periplasmic side. The stretch at 33–53 (ERQVELQEAKNSLLALRNAKL) forms a coiled coil.

It belongs to the FtsB family. Part of a complex composed of FtsB, FtsL and FtsQ.

Its subcellular location is the cell inner membrane. Functionally, essential cell division protein. May link together the upstream cell division proteins, which are predominantly cytoplasmic, with the downstream cell division proteins, which are predominantly periplasmic. This is Cell division protein FtsB from Polynucleobacter necessarius subsp. necessarius (strain STIR1).